A 60-amino-acid polypeptide reads, in one-letter code: Homeobox protein engrailed-like B (60 aa).

A DNA-binding region (homeobox) is located at residues 1–41; that stretch reads VEQLQRLKSEFGASRYLTEARRQALAQELRLNEAQIKIWFQ.

It belongs to the engrailed homeobox family.

It is found in the nucleus. The chain is Homeobox protein engrailed-like B from Myxine glutinosa (Atlantic hagfish).